We begin with the raw amino-acid sequence, 332 residues long: Malate dehydrogenase (332 aa).

NAD(+) is bound at residue 15–21 (GAAGHIG). Substrate-binding residues include Arg-96 and Arg-102. NAD(+) is bound by residues Asn-109 and 133 to 135 (VGN). Substrate contacts are provided by Asn-135 and Arg-166. His-191 functions as the Proton acceptor in the catalytic mechanism.

This sequence belongs to the LDH/MDH superfamily. MDH type 2 family.

The enzyme catalyses (S)-malate + NAD(+) = oxaloacetate + NADH + H(+). Its function is as follows. Catalyzes the reversible oxidation of malate to oxaloacetate. The sequence is that of Malate dehydrogenase from Mycolicibacterium vanbaalenii (strain DSM 7251 / JCM 13017 / BCRC 16820 / KCTC 9966 / NRRL B-24157 / PYR-1) (Mycobacterium vanbaalenii).